Consider the following 242-residue polypeptide: Uridylate kinase (242 aa).

ATP is bound at residue 12 to 15 (KLSG). The tract at residues 20–25 (GNDGFG) is involved in allosteric activation by GTP. Gly54 lines the UMP pocket. ATP-binding residues include Gly55 and Arg59. Residues Asp74 and 135–142 (TGNPYFST) contribute to the UMP site. Residues Asn163, Tyr169, and Asp172 each contribute to the ATP site.

It belongs to the UMP kinase family. As to quaternary structure, homohexamer.

The protein localises to the cytoplasm. It carries out the reaction UMP + ATP = UDP + ADP. It functions in the pathway pyrimidine metabolism; CTP biosynthesis via de novo pathway; UDP from UMP (UMPK route): step 1/1. Its activity is regulated as follows. Allosterically activated by GTP. Inhibited by UTP. Catalyzes the reversible phosphorylation of UMP to UDP. The polypeptide is Uridylate kinase (Listeria innocua serovar 6a (strain ATCC BAA-680 / CLIP 11262)).